A 362-amino-acid chain; its full sequence is S-adenosylmethionine decarboxylase proenzyme 2 (362 aa).

Active-site residues include glutamate 9 and glutamate 12. Residue glutamate 68 participates in substrate binding. The Schiff-base intermediate with substrate; via pyruvic acid role is filled by serine 69. Pyruvic acid (Ser); by autocatalysis is present on serine 69. Catalysis depends on cysteine 83, which acts as the Proton donor; for catalytic activity. Residues serine 232 and histidine 245 each act as proton acceptor; for processing activity in the active site. Glutamate 249 serves as a coordination point for substrate.

This sequence belongs to the eukaryotic AdoMetDC family. Requires pyruvate as cofactor. Is synthesized initially as an inactive proenzyme. Formation of the active enzyme involves a self-maturation process in which the active site pyruvoyl group is generated from an internal serine residue via an autocatalytic post-translational modification. Two non-identical subunits are generated from the proenzyme in this reaction, and the pyruvate is formed at the N-terminus of the alpha chain, which is derived from the carboxyl end of the proenzyme. The post-translation cleavage follows an unusual pathway, termed non-hydrolytic serinolysis, in which the side chain hydroxyl group of the serine supplies its oxygen atom to form the C-terminus of the beta chain, while the remainder of the serine residue undergoes an oxidative deamination to produce ammonia and the pyruvoyl group blocking the N-terminus of the alpha chain.

The catalysed reaction is S-adenosyl-L-methionine + H(+) = S-adenosyl 3-(methylsulfanyl)propylamine + CO2. Its pathway is amine and polyamine biosynthesis; S-adenosylmethioninamine biosynthesis; S-adenosylmethioninamine from S-adenosyl-L-methionine: step 1/1. Essential for biosynthesis of the polyamines spermidine and spermine. Essential for polyamine homeostasis, and normal plant embryogenesis, growth and development. This Arabidopsis thaliana (Mouse-ear cress) protein is S-adenosylmethionine decarboxylase proenzyme 2.